The following is an 812-amino-acid chain: MFGTPSRRTFLTASALSAMALAASPTVTDAIAAPGPDSWSALCERWIDIITGRRAARTSDPRARAIIAKTDRKVAEILTDLVSGSSRQTVLISADLRKEQSPFITKTARAIESMACGWATPGSSYHKDPEILSACIEGLRDFCRLRYNPSQDEYGNWWDWEDGASRAVADVMCILHDVLPPEVMSAAAAGIDHFIPDPWFQQPGSVKPTANPVQPVVSTGANRMDLTRAVMCRSIATGDEKRLRHAVDGLPDAWRVTTEGDGFRADGGFIQHSHIPYTGGYGDVLFSGLAMLFPLVSGMRFDIDESARKAFHDQVERGFIPVMYNGQILDDVRGRSISRINESAAMHGISIARAMLMMADALPTHRAEQWRGIVHGWMARNTFDHLSEPSTLVDISLFDAAAKAPRPGVVDAELLRVHGPSRPATADWLITVSNCSDRIAWYEYGNGENEWAYRTSQGMRYLLLPGDMGQYEDGYWATVDYSAPTGTTVDSTPLKRAVGASWAAKTPTNEWSGGLASGSWSAAASHITSQDSALKARRLWVGLKDAMVELTTDVTTDASRAITVVEHRKVASSSTKLLVDGNRVSSATSFQNPRWAHLDGVGGYVFATDTDLSADVATRKGTWIDVNPSRKVKGADEVIERAYASLHGHPPRSSSPWALLPTASRSHTMALATRPGVEPFTVLRNDGNRPGRASAGALLTKDPTVVTTLAFWKPATCGGVAVNRPALVQTRESANQMEVVIVEPTQKRGSLTVTIEGSWKVKTADSHVDVSCENAAGTLHVDTAGLGGQSVRVTLARQVTQTPSGGGRHDRA.

Positions 1 to 32 (MFGTPSRRTFLTASALSAMALAASPTVTDAIA) form a signal peptide, tat-type signal. Catalysis depends on residues Asn222, His272, and Tyr281.

It belongs to the polysaccharide lyase 8 family. Predicted to be exported by the Tat system. The position of the signal peptide cleavage has been experimentally proven.

It is found in the secreted. The catalysed reaction is [hyaluronan](n) = n 3-(4-deoxy-beta-D-gluc-4-enuronosyl)-N-acetyl-D-glucosamine + H2O. Its function is as follows. Degrades hyaluronic acid (HA) exclusively into HA disaccharides (HA-2). Produced HA-2s confer anti-inflammatory properties leading to reduced immunopathology in the mouse model of acne. In Cutibacterium acnes (Propionibacterium acnes), this protein is Hyaluronate lyase HylB.